We begin with the raw amino-acid sequence, 136 residues long: Large ribosomal subunit protein uL16 (136 aa).

This sequence belongs to the universal ribosomal protein uL16 family. In terms of assembly, part of the 50S ribosomal subunit.

Functionally, binds 23S rRNA and is also seen to make contacts with the A and possibly P site tRNAs. This Pectobacterium atrosepticum (strain SCRI 1043 / ATCC BAA-672) (Erwinia carotovora subsp. atroseptica) protein is Large ribosomal subunit protein uL16.